A 556-amino-acid polypeptide reads, in one-letter code: Glutamine--tRNA ligase (556 aa).

A 'HIGH' region motif is present at residues 35 to 45; the sequence is PEPNGYLHIGH. ATP is bound by residues 36–38 and 42–48; these read EPN and HIGHAKS. Residues Asp-68 and Tyr-213 each coordinate L-glutamine. Residues Thr-232 and 262–263 each bind ATP; that span reads RL. The short motif at 269-273 is the 'KMSKS' region element; it reads VTSKR.

Belongs to the class-I aminoacyl-tRNA synthetase family. As to quaternary structure, monomer.

The protein localises to the cytoplasm. The enzyme catalyses tRNA(Gln) + L-glutamine + ATP = L-glutaminyl-tRNA(Gln) + AMP + diphosphate. This is Glutamine--tRNA ligase from Pseudomonas aeruginosa (strain LESB58).